Here is a 250-residue protein sequence, read N- to C-terminus: MTESILAAQIEVGEHHTATWLGMTVNTDTVLSTAIAALIVLALAFYLRSKVTSTAVPGGVQLFFEAITIQMRGQVESAIGMRIAPFVLPLAVTIFVFILISNWLSVLPVQYTDEHGQTTELLKPAAADINYVLALALFVFVCYHAAGIWRRGIVGHPIKLLKGHVAILAPINLVEEIAKPISLSLRLFGNIFAGGILVALIALFPPYIMWAPNAIWKSFDLFVGAIQAFIFALLTILYFSQAMELEEDHH.

Transmembrane regions (helical) follow at residues 27–47, 83–103, 129–149, 191–211, and 219–239; these read TDTVLSTAIAALIVLALAFYL, IAPFVLPLAVTIFVFILISNW, INYVLALALFVFVCYHAAGIW, IFAGGILVALIALFPPYIMWA, and FDLFVGAIQAFIFALLTILYF.

It belongs to the ATPase A chain family. In terms of assembly, F-type ATPases have 2 components, CF(1) - the catalytic core - and CF(0) - the membrane proton channel. CF(1) has five subunits: alpha(3), beta(3), gamma(1), delta(1), epsilon(1). CF(0) has three main subunits: a(1), b(2) and c(9-12). The alpha and beta chains form an alternating ring which encloses part of the gamma chain. CF(1) is attached to CF(0) by a central stalk formed by the gamma and epsilon chains, while a peripheral stalk is formed by the delta and b chains.

Its subcellular location is the cell membrane. Its function is as follows. Key component of the proton channel; it plays a direct role in the translocation of protons across the membrane. The sequence is that of ATP synthase subunit a from Mycobacterium marinum (strain ATCC BAA-535 / M).